The sequence spans 399 residues: Ubiquitin-like modifier-activating enzyme 5 (399 aa).

The ATP site is built by glycine 76, aspartate 97, lysine 120, asparagine 143, and asparagine 177. 2 residues coordinate Zn(2+): cysteine 219 and cysteine 222. Catalysis depends on cysteine 243, which acts as the Glycyl thioester intermediate. Zn(2+) contacts are provided by cysteine 296 and cysteine 301.

It belongs to the ubiquitin-activating E1 family. UBA5 subfamily.

Functionally, E1-like enzyme which activates UFM1. The sequence is that of Ubiquitin-like modifier-activating enzyme 5 from Drosophila mojavensis (Fruit fly).